The sequence spans 177 residues: Mitochondrial inner membrane protease subunit 2 (177 aa).

A helical transmembrane segment spans residues 19-37 (FFVAVPVAVTFLDRVACVA). Residues S43 and K91 contribute to the active site.

It belongs to the peptidase S26 family. IMP2 subfamily. As to quaternary structure, heterodimer of 2 subunits, IMMPL1 and IMMPL2.

It localises to the mitochondrion inner membrane. Functionally, catalyzes the removal of transit peptides required for the targeting of proteins from the mitochondrial matrix, across the inner membrane, into the inter-membrane space. Known to process the nuclear encoded protein DIABLO. The protein is Mitochondrial inner membrane protease subunit 2 (IMMP2L) of Bos taurus (Bovine).